Consider the following 203-residue polypeptide: Urease accessory protein UreG (203 aa).

14 to 21 (GPVGSGKT) provides a ligand contact to GTP.

The protein belongs to the SIMIBI class G3E GTPase family. UreG subfamily. In terms of assembly, homodimer. UreD, UreF and UreG form a complex that acts as a GTP-hydrolysis-dependent molecular chaperone, activating the urease apoprotein by helping to assemble the nickel containing metallocenter of UreC. The UreE protein probably delivers the nickel.

It is found in the cytoplasm. Its function is as follows. Facilitates the functional incorporation of the urease nickel metallocenter. This process requires GTP hydrolysis, probably effectuated by UreG. The chain is Urease accessory protein UreG from Rhizobium rhizogenes (strain K84 / ATCC BAA-868) (Agrobacterium radiobacter).